Consider the following 286-residue polypeptide: MTGTLERENWISGGKSLVLRKQHPGPLRPWRKRAAQLGGGCGWRTAVAPAKFCLWYVVPSWLWEPPGYLHSSLFLSILFQVTLLETALQSRPNLSLPLVRCGWACTQAMSTRSNCGSRSFLWAQTQADAASGLPRSRLGFLGLGGCGLIVKHGMTLRNWASFFVVFQAWSLMILQVLGDMLNIYYAYIQATLTLKVDVAPRLFFPEGGALKEHFSSMDSFQLREAGGTRIPRPALIYGRAVVTRTVTKAQSLKSALAWAALGCKHPVLSTLCEESQQGAWSEFRRF.

Helical transmembrane passes span 68-88 (YLHSSLFLSILFQVTLLETAL) and 161-181 (SFFVVFQAWSLMILQVLGDML).

It belongs to the FAM87 family.

The protein localises to the membrane. This is Protein FAM87A (FAM87A) from Homo sapiens (Human).